We begin with the raw amino-acid sequence, 724 residues long: Propionyl-CoA carboxylase alpha chain, mitochondrial (724 aa).

Positions 48–495 constitute a Biotin carboxylation domain; sequence KFDKILIANR…TTKYLPEVYP (448 aa). ATP-binding positions include Lys163, 195 to 256, Glu247, and Asn282; that span reads SRDI…PRHI. The ATP-grasp domain maps to 167–364; it reads KKIATAARVS…IVQQMLRVSY (198 aa). Residues Glu322, Glu335, and Asn337 each contribute to the Mg(2+) site. The Mn(2+) site is built by Glu322, Glu335, and Asn337. Residue Arg339 is part of the active site. Phe395 contacts biotin. The 76-residue stretch at 649-724 folds into the Biotinyl-binding domain; it reads KAKVDLSTVV…DEGEVLVELE (76 aa). Lys690 is subject to N6-biotinyllysine.

The holoenzyme is a dodecamer composed of 6 alpha subunits and 6 beta subunits. Interacts with sir-2.2 and sir-2.3. It depends on biotin as a cofactor. Mg(2+) is required as a cofactor. Mn(2+) serves as cofactor. In terms of processing, the biotin cofactor is covalently attached to the C-terminal biotinyl-binding domain and is required for the catalytic activity.

It localises to the mitochondrion matrix. It catalyses the reaction propanoyl-CoA + hydrogencarbonate + ATP = (S)-methylmalonyl-CoA + ADP + phosphate + H(+). The catalysed reaction is butanoyl-CoA + hydrogencarbonate + ATP = (2S)-ethylmalonyl-CoA + ADP + phosphate + H(+). The protein operates within metabolic intermediate metabolism; propanoyl-CoA degradation; succinyl-CoA from propanoyl-CoA: step 1/3. Functionally, this is one of the 2 subunits of the biotin-dependent propionyl-CoA carboxylase (PCC), a mitochondrial enzyme involved in the catabolism of odd chain fatty acids, branched-chain amino acids isoleucine, threonine, methionine, and valine and other metabolites. Propionyl-CoA carboxylase catalyzes the carboxylation of propionyl-CoA/propanoyl-CoA to D-methylmalonyl-CoA/(S)-methylmalonyl-CoA. Within the holoenzyme, the alpha subunit catalyzes the ATP-dependent carboxylation of the biotin carried by the biotin carboxyl carrier (BCC) domain, while the beta subunit then transfers the carboxyl group from carboxylated biotin to propionyl-CoA. Propionyl-CoA carboxylase also significantly acts on butyryl-CoA/butanoyl-CoA, which is converted to ethylmalonyl-CoA/(2S)-ethylmalonyl-CoA. Other alternative minor substrates include (2E)-butenoyl-CoA/crotonoyl-CoA. The protein is Propionyl-CoA carboxylase alpha chain, mitochondrial (pcca-1) of Caenorhabditis elegans.